Consider the following 95-residue polypeptide: Putative membrane protein insertion efficiency factor (95 aa).

Belongs to the UPF0161 family.

The protein localises to the cell membrane. Could be involved in insertion of integral membrane proteins into the membrane. The chain is Putative membrane protein insertion efficiency factor from Lactobacillus delbrueckii subsp. bulgaricus (strain ATCC 11842 / DSM 20081 / BCRC 10696 / JCM 1002 / NBRC 13953 / NCIMB 11778 / NCTC 12712 / WDCM 00102 / Lb 14).